The primary structure comprises 57 residues: Putative secreted protein ML2569.1 (57 aa).

A signal peptide spans 1–32; the sequence is MSRIVAPAAASVVVGLLLGAATIFGMTLMVQQ. Positions 34–57 are disordered; that stretch reads TKPPLPGGDPQSSVLNRVEYGNRT.

The sequence is that of Putative secreted protein ML2569.1 from Mycobacterium leprae (strain TN).